Consider the following 77-residue polypeptide: Metallothionein-like protein 2B (77 aa).

Belongs to the metallothionein superfamily. Type 15 family. Expressed in vascular tissues of all organs. Expressed in root and leaf phloem, pollen and root hairs.

Functionally, metallothioneins have a high content of cysteine residues that bind various heavy metals. Functions as a metal chelator of copper (Cu) and zinc (Zn). Functions cooperatively with the phytochelatin synthase PCS1 to protect plants from Cu and cadmium toxicity. Plays a role in Cu homeostasis, specifically in the remobilization of Cu from senescing leaves. The mobilization of Cu from internal sources is important for seed development. The chain is Metallothionein-like protein 2B (MT2B) from Arabidopsis thaliana (Mouse-ear cress).